The following is an 827-amino-acid chain: Lon protease (827 aa).

The 196-residue stretch at 38–233 (LTLLASKYNV…VLLKYLLKDL (196 aa)) folds into the Lon N-terminal domain. Residue 384–391 (GPPGVGKT) coordinates ATP. One can recognise a Lon proteolytic domain in the interval 619–800 (THLPGVAIGL…EEVIQLALQP (182 aa)). Active-site residues include S706 and K749.

It belongs to the peptidase S16 family. Homohexamer. Organized in a ring with a central cavity.

The protein localises to the cytoplasm. The enzyme catalyses Hydrolysis of proteins in presence of ATP.. ATP-dependent serine protease that mediates the selective degradation of mutant and abnormal proteins as well as certain short-lived regulatory proteins. Required for cellular homeostasis and for survival from DNA damage and developmental changes induced by stress. Degrades polypeptides processively to yield small peptide fragments that are 5 to 10 amino acids long. Binds to DNA in a double-stranded, site-specific manner. The protein is Lon protease of Amoebophilus asiaticus (strain 5a2).